Reading from the N-terminus, the 349-residue chain is UDP-3-O-acylglucosamine N-acyltransferase 1 (349 aa).

H241 (proton acceptor) is an active-site residue.

The protein belongs to the transferase hexapeptide repeat family. LpxD subfamily. As to quaternary structure, homotrimer.

It carries out the reaction a UDP-3-O-[(3R)-3-hydroxyacyl]-alpha-D-glucosamine + a (3R)-hydroxyacyl-[ACP] = a UDP-2-N,3-O-bis[(3R)-3-hydroxyacyl]-alpha-D-glucosamine + holo-[ACP] + H(+). It functions in the pathway bacterial outer membrane biogenesis; LPS lipid A biosynthesis. Catalyzes the N-acylation of UDP-3-O-acylglucosamine using 3-hydroxyacyl-ACP as the acyl donor. Is involved in the biosynthesis of lipid A, a phosphorylated glycolipid that anchors the lipopolysaccharide to the outer membrane of the cell. This is UDP-3-O-acylglucosamine N-acyltransferase 1 from Gloeobacter violaceus (strain ATCC 29082 / PCC 7421).